Consider the following 107-residue polypeptide: CLAVATA3/ESR (CLE)-related protein 13 (107 aa).

An N-terminal signal peptide occupies residues 1 to 25; the sequence is MATTRVSHVLGFLLWISLLIFVSIG. Asparagine 29 carries N-linked (GlcNAc...) asparagine glycosylation. Residues 79-107 are disordered; the sequence is ALPAGGSEIDPRYGVEKRLVPSGPNPLHH. The span at 87–97 shows a compositional bias: basic and acidic residues; sequence IDPRYGVEKRL. Hydroxyproline is present on residues proline 99 and proline 102. A glycan (O-linked (Ara...) hydroxyproline) is linked at proline 102.

Belongs to the CLV3/ESR signal peptide family. The O-glycosylation (arabinosylation) of the hydroxyproline Pro-102 enhances binding affinity of the CLE13p peptide for its receptor. Mostly expressed in seedlings, roots, flowers, stems and apex, and, to a lower extent, in leaves and siliques.

Its subcellular location is the secreted. It localises to the extracellular space. In terms of biological role, extracellular signal peptide that regulates cell fate. Represses root apical meristem maintenance. Regulates the transition of protophloem cells from proliferation to differentiation, thus impinging on postembryonic growth capacity of the root meristem; this signaling pathway requires CRN and CLV2. This is CLAVATA3/ESR (CLE)-related protein 13 from Arabidopsis thaliana (Mouse-ear cress).